A 539-amino-acid chain; its full sequence is Membrane protein insertase YidC (539 aa).

The helical transmembrane segment at 7 to 27 threads the bilayer; sequence IIAIALSFVVLVGWSYLADHM. A disordered region spans residues 32–64; sequence QPAPQAQQEETAPSASQAAPQSASQAAAPAPRA. The next 3 membrane-spanning stretches (helical) occupy residues 347–367, 418–438, and 498–518; these read YVGNYGVAIILLTVVIKLVFW, GGCLPMLVQIPVFFGLYQALL, and IMMFMPVVFTFMFLSFPSGLV.

It belongs to the OXA1/ALB3/YidC family. Type 1 subfamily. Interacts with the Sec translocase complex via SecD. Specifically interacts with transmembrane segments of nascent integral membrane proteins during membrane integration.

It localises to the cell inner membrane. Functionally, required for the insertion and/or proper folding and/or complex formation of integral membrane proteins into the membrane. Involved in integration of membrane proteins that insert both dependently and independently of the Sec translocase complex, as well as at least some lipoproteins. Aids folding of multispanning membrane proteins. This is Membrane protein insertase YidC from Nitratidesulfovibrio vulgaris (strain DSM 19637 / Miyazaki F) (Desulfovibrio vulgaris).